The primary structure comprises 272 residues: Hemin import ATP-binding protein HmuV (272 aa).

The 254-residue stretch at leucine 2–arginine 255 folds into the ABC transporter domain. Glycine 34–serine 41 contributes to the ATP binding site.

Belongs to the ABC transporter superfamily. Heme (hemin) importer (TC 3.A.1.14.5) family. In terms of assembly, the complex is composed of two ATP-binding proteins (HmuV), two transmembrane proteins (HmuU) and a solute-binding protein (HmuT).

It is found in the cell inner membrane. Its function is as follows. Part of the ABC transporter complex HmuTUV involved in hemin import. Responsible for energy coupling to the transport system. This Burkholderia pseudomallei (strain 1710b) protein is Hemin import ATP-binding protein HmuV.